A 188-amino-acid chain; its full sequence is dCTP deaminase (188 aa).

DCTP-binding positions include 111–116 (KSTYAR), 135–137 (TLE), glutamine 156, tyrosine 170, and glutamine 180. The Proton donor/acceptor role is filled by glutamate 137.

This sequence belongs to the dCTP deaminase family. Homotrimer.

It catalyses the reaction dCTP + H2O + H(+) = dUTP + NH4(+). The protein operates within pyrimidine metabolism; dUMP biosynthesis; dUMP from dCTP (dUTP route): step 1/2. Its function is as follows. Catalyzes the deamination of dCTP to dUTP. In Nitrosomonas eutropha (strain DSM 101675 / C91 / Nm57), this protein is dCTP deaminase.